The primary structure comprises 158 residues: Glycine-rich RNA-binding protein 2, mitochondrial (158 aa).

Residues Met-1–Ser-34 constitute a mitochondrion transit peptide. In terms of domain architecture, RRM spans Thr-35–Asp-113. Ser-43 is modified (phosphoserine). A glycine-rich (GR) required for cell-to-cell movement region spans residues Gly-122 to Gly-157.

The protein belongs to the GR-RBP family. In terms of assembly, binds to small phloem-mobile single-stranded RNAs (ss-sRNA, e.g. small interfering RNA (siRNA) and microRNA (miRNA)) in the phloeme exudate, including viral-derived sRNA (vsiRNA). Interacts with ORRM2, RBG3/ORRM3 and RBG5/ORRM4.

Its subcellular location is the mitochondrion. The protein resides in the secreted. Its function is as follows. Promotes the cis-splicing and editing of several mitochondrial RNAs (including NAD5 transcripts). Plays a role in RNA transcription or processing during stress. Binds RNAs and DNAs sequence with a preference to single-stranded nucleic acids. Displays strong affinity to poly(U) sequence. Exerts cold and freezing tolerance, probably by exhibiting an RNA chaperone activity during the cold and freezing adaptation process. Mediates cell-to-cell trafficking of RNA interference (RNAi) signals (small RNAs (sRNA), e.g. small interfering RNA (siRNA) and microRNA (miRNA)) which regulate growth and development, as well as responses to environmental inputs, including pathogen attack; can compromise zucchini yellow mosaic virus (ZYMV) and tobacco rattle virus (TRV) infections at the early stage. This is Glycine-rich RNA-binding protein 2, mitochondrial from Arabidopsis thaliana (Mouse-ear cress).